The chain runs to 277 residues: Myelin proteolipid protein (277 aa).

At 1 to 10 the chain is on the cytoplasmic side; that stretch reads MGLLECCARC. 3 S-palmitoyl cysteine lipidation sites follow: cysteine 6, cysteine 7, and cysteine 10. Residues 11–36 form a helical membrane-spanning segment; sequence LVGAPFASLVATGLCFFGVALFCGCG. At 37 to 59 the chain is on the extracellular side; the sequence is HEALTGTEKLIETYFSKNYQDYE. Residues 60–88 form a helical membrane-spanning segment; sequence YLINVIHAFQYVIYGTASFFFLYGALLLA. The Cytoplasmic segment spans residues 89–151; sequence EGFYTTGAVR…LGKWLGHPDK (63 aa). A lipid anchor (S-palmitoyl cysteine) is attached at cysteine 109. Serine 114 is subject to Phosphoserine. 2 positions are modified to phosphothreonine: threonine 116 and threonine 118. S-palmitoyl cysteine attachment occurs at residues cysteine 139 and cysteine 141. The chain crosses the membrane as a helical span at residues 152 to 178; the sequence is FVGITYALTVVWLLVFACSAVPVYIYF. Topologically, residues 179 to 238 are extracellular; the sequence is NTWTTCQSIAFPSKTSASIGTLCADARMYGVLPWNAFPGKVCGSNLLSICKTAEFQMTFH. Intrachain disulfides connect cysteine 184-cysteine 228 and cysteine 201-cysteine 220. Threonine 199 carries the O-palmitoyl threonine lipid modification. A helical transmembrane segment spans residues 239–268; sequence LFIAAFVGAAATLVSLLTFMIAATYNFAVL. Residues 269-277 lie on the Cytoplasmic side of the membrane; that stretch reads KLMGRGTKF.

The protein belongs to the myelin proteolipid protein family. Interacts with MAL.

Its subcellular location is the cell membrane. It is found in the myelin membrane. Functionally, this is the major myelin protein from the central nervous system. It plays an important role in the formation or maintenance of the multilamellar structure of myelin. This chain is Myelin proteolipid protein (PLP1), found in Oryctolagus cuniculus (Rabbit).